The primary structure comprises 72 residues: Penaeidin-2a (72 aa).

A signal peptide spans 1-21 (MRLVVCLVFLASFALVCQGEA). 3 disulfide bridges follow: C45-C59, C48-C66, and C60-C67. A Lysine amide modification is found at K71.

In terms of tissue distribution, higher expression in hemocytes and to a lesser extent in heart, testis, gills, intestine, lymphoid organ and hepatopancreas. Traces in eyes and subcuticular epithelium. Not present in the brain.

The protein resides in the cytoplasmic granule. Functionally, antibacterial activity against M.luteus and E.coli bacteria. Antifungal activity against N.crassa and F.oxysporum. Presents chitin-binding activity. This Penaeus vannamei (Whiteleg shrimp) protein is Penaeidin-2a.